The following is a 212-amino-acid chain: Large ribosomal subunit protein uL3 (212 aa).

Residues 136 to 155 (THGNSLSHRSNGSIGQNQTP) are disordered. Gln153 carries the post-translational modification N5-methylglutamine.

Belongs to the universal ribosomal protein uL3 family. In terms of assembly, part of the 50S ribosomal subunit. Forms a cluster with proteins L14 and L19. Methylated by PrmB.

In terms of biological role, one of the primary rRNA binding proteins, it binds directly near the 3'-end of the 23S rRNA, where it nucleates assembly of the 50S subunit. This chain is Large ribosomal subunit protein uL3, found in Shewanella baltica (strain OS223).